Here is an 834-residue protein sequence, read N- to C-terminus: MVMHARKPQRMNDGYFEKHTSHTSYQSSKYSSSKRDYERDRSSNYRDRDLSPGAGGGGGGGSAGGGGGGSGNGGGPLNNGNSYRSQSPDIDSPSSRSHDLRDRSDHRGGGGGNGRGGSGERYSFMQKMRDRDRDVYKKDKYSDKRDRRGNDRDSESSYRTNHDRDRRGGGGSGGGSGKLCSSRENDKRSGSDDRDRDRDRDLRDLRDKRDRGSDRDRDMYKKDKYADKRERSDRGERTARYGDWSEHVSSSGKMYYYNCKTEISQWEKPKEWVDRERNLPRDQHREKDYRDKDRDRDRDDRFSRSTYKHSNSSRDNSRLRWNYDNDGGPPSHRRRLDGRHNDNADMDISGDSTPTSEASYSLSGTPTTHGGGPGGGGPGGGGGSNSDQPMGNALPRLSSHPTANSSASVATGTGATGGLHYGSGTGGGPVTGATMLPTMSGMLNSNSSNSAGGSSSNASSSSLRNSVVGHIGSTSGTTVPTLGSQDPHQHHLNSNAPLPPGAKGKDQALLMRQKMHLGLGVLDVQSHHGVNSVGSVSDGTNHAYNSVNNSVSGSLRDNSVNSPLYMHHSMSPSLNFTKSPIPTIVGHTNNMSIAYTCNPPFGLKATLDGGVMVANASPATPGGNASSGSSGANSSQSIVPGMGPVCGISVITSMGSNSGTLCEGPPTPTQELDLSGSALEQQQLAAAAAAATASSLQLQAAQQAQQQRKLDGTSSATLSSLQSCVSSSGQAANLRGPEISPKLAKYFRADLIAHVTNWHAEVLERQAQKCCEDTHLFGDITCTRICAELKCARSLVRSTEINATLQEQKIMYLRHQIRRIEESKTQNAFMSDDT.

Disordered stretches follow at residues Met-1–His-247, Lys-268–Thr-411, and Val-430–Gly-504. Residues His-22 to Ser-31 are compositionally biased toward low complexity. Residues Ser-33–Leu-50 are compositionally biased toward basic and acidic residues. Gly residues predominate over residues Gly-53–Leu-77. Basic and acidic residues predominate over residues Arg-96–Gly-108. Positions Gly-109–Gly-119 are enriched in gly residues. Composition is skewed to basic and acidic residues over residues Lys-127–Gly-168, Ser-181–Glu-246, and Lys-268–Ser-303. The WW domain maps to Trp-244–Glu-271. 2 stretches are compositionally biased toward polar residues: residues Arg-304–Arg-314 and Gly-350–Ser-363. The span at His-369–Ser-384 shows a compositional bias: gly residues. 2 stretches are compositionally biased toward low complexity: residues Thr-402–Thr-411 and Thr-431–Ser-466. Polar residues predominate over residues Gly-472–Ala-496.

Expressed in adult head and thorax and in larval central nervous system and fat body.

The protein localises to the nucleus. The protein resides in the lysosome. In terms of biological role, acts as a linker between gene transcription and histone H2B monoubiquitination at 'Lys-118'. Regulates the cell-cycle checkpoint activation in response to DNA damage. Positive regulator of amino acid starvation-induced autophagy. Also acts as a negative regulator of basal autophagy. Positively regulates mTor activity. Promotes, in an energy-dependent manner, the assembly of the TTT complex and the RUVBL complex composed of pont and rept into the TTT-RUVBL complex. This leads to dimerization of the mTORC1 complex and its subsequent activation. May negatively regulate the ubiquitin proteasome pathway. Required for habituation, a form of non-associative learning. The sequence is that of WW domain-containing adapter protein with coiled-coil homolog from Drosophila melanogaster (Fruit fly).